A 246-amino-acid chain; its full sequence is Ribonuclease PH (246 aa).

Phosphate contacts are provided by residues R91 and G129–R131.

This sequence belongs to the RNase PH family. In terms of assembly, homohexameric ring arranged as a trimer of dimers.

It carries out the reaction tRNA(n+1) + phosphate = tRNA(n) + a ribonucleoside 5'-diphosphate. Its function is as follows. Phosphorolytic 3'-5' exoribonuclease that plays an important role in tRNA 3'-end maturation. Removes nucleotide residues following the 3'-CCA terminus of tRNAs; can also add nucleotides to the ends of RNA molecules by using nucleoside diphosphates as substrates, but this may not be physiologically important. Probably plays a role in initiation of 16S rRNA degradation (leading to ribosome degradation) during starvation. This is Ribonuclease PH from Burkholderia cenocepacia (strain ATCC BAA-245 / DSM 16553 / LMG 16656 / NCTC 13227 / J2315 / CF5610) (Burkholderia cepacia (strain J2315)).